The chain runs to 477 residues: Protoporphyrinogen oxidase (477 aa).

Residues 9-14, 34-35, W42, 57-60, V257, A449, and 454-456 each bind FAD; these read GGGISG, ES, GPRG, and VAV.

It belongs to the protoporphyrinogen/coproporphyrinogen oxidase family. Protoporphyrinogen oxidase subfamily. Monomer. Homodimer. FAD serves as cofactor. Expressed in heart, brain, placenta, lung, liver, skeletal muscle, kidney and pancreas.

It is found in the mitochondrion inner membrane. It carries out the reaction protoporphyrinogen IX + 3 O2 = protoporphyrin IX + 3 H2O2. Its pathway is porphyrin-containing compound metabolism; protoporphyrin-IX biosynthesis; protoporphyrin-IX from protoporphyrinogen-IX: step 1/1. In terms of biological role, catalyzes the 6-electron oxidation of protoporphyrinogen-IX to form protoporphyrin-IX. This Homo sapiens (Human) protein is Protoporphyrinogen oxidase (PPOX).